The following is a 385-amino-acid chain: GPN-loop GTPase 1 (385 aa).

13–18 serves as a coordination point for GTP; that stretch reads GSGKTT. A Gly-Pro-Asn (GPN)-loop; involved in dimer interface motif is present at residues 70-72; that stretch reads GPN. Residue 173-176 coordinates GTP; that stretch reads NKTD. Serine 304, serine 308, and serine 313 each carry phosphoserine. Over residues 317–332 the composition is skewed to acidic residues; that stretch reads EDANDGLVDRDEDEGV. Residues 317-356 are disordered; sequence EDANDGLVDRDEDEGVEREYTFPGEERTKGEVNENSAPDL. Over residues 333-348 the composition is skewed to basic and acidic residues; it reads EREYTFPGEERTKGEV. A Phosphoserine modification is found at serine 352. Residue lysine 369 forms a Glycyl lysine isopeptide (Lys-Gly) (interchain with G-Cter in ubiquitin) linkage.

It belongs to the GPN-loop GTPase family. As to quaternary structure, heterodimers with GPN2 or GPN3. Binds to RNA polymerase II (RNAPII) in a GTP-dependent manner. Interacts with nuclear pore protein NUP133 and nuclear export factor CRM1. Interacts with PCL1. Post-translationally, phosphorylated by the cyclin-CDK PCL1-PHO85.

The protein resides in the cytoplasm. In terms of biological role, small GTPase required for proper nuclear import of RNA polymerase II (RNAPII). May act at an RNAP assembly step prior to nuclear import. Promotes sister chromatid separation during anaphase. This Saccharomyces cerevisiae (strain ATCC 204508 / S288c) (Baker's yeast) protein is GPN-loop GTPase 1.